Consider the following 437-residue polypeptide: Putative galacturan 1,4-alpha-galacturonidase A (437 aa).

The first 20 residues, 1–20 (MKLSGSSALLLLGFGLLGHA), serve as a signal peptide directing secretion. Residues asparagine 30, asparagine 101, asparagine 110, asparagine 161, asparagine 196, and asparagine 203 are each glycosylated (N-linked (GlcNAc...) asparagine). A PbH1 1 repeat occupies 222–243 (SDHVTITNWVYEGGDDAVAFKP). Aspartate 236 acts as the Proton donor in catalysis. Asparagine 244, asparagine 252, asparagine 278, asparagine 324, asparagine 352, asparagine 371, asparagine 382, and asparagine 387 each carry an N-linked (GlcNAc...) asparagine glycan. 3 PbH1 repeats span residues 245 to 265 (STNI…AFGS), 276 to 302 (VENI…YFKS), and 322 to 343 (VRNV…YIDT). A disulfide bridge connects residues cysteine 396 and cysteine 402.

Belongs to the glycosyl hydrolase 28 family.

The protein resides in the secreted. It catalyses the reaction [(1-&gt;4)-alpha-D-galacturonosyl](n) + H2O = alpha-D-galacturonate + [(1-&gt;4)-alpha-D-galacturonosyl](n-1). Its function is as follows. Specific in hydrolyzing the terminal glycosidic bond of polygalacturonic acid and oligogalacturonates. The polypeptide is Putative galacturan 1,4-alpha-galacturonidase A (rgxA) (Aspergillus flavus (strain ATCC 200026 / FGSC A1120 / IAM 13836 / NRRL 3357 / JCM 12722 / SRRC 167)).